The primary structure comprises 763 residues: Xaa-Pro dipeptidyl-peptidase (763 aa).

Residues serine 348, aspartate 468, and histidine 498 each act as charge relay system in the active site.

Belongs to the peptidase S15 family. As to quaternary structure, homodimer.

It localises to the cytoplasm. The catalysed reaction is Hydrolyzes Xaa-Pro-|- bonds to release unblocked, N-terminal dipeptides from substrates including Ala-Pro-|-p-nitroanilide and (sequentially) Tyr-Pro-|-Phe-Pro-|-Gly-Pro-|-Ile.. Removes N-terminal dipeptides sequentially from polypeptides having unsubstituted N-termini provided that the penultimate residue is proline. The protein is Xaa-Pro dipeptidyl-peptidase of Lactococcus lactis subsp. cremoris (strain SK11).